We begin with the raw amino-acid sequence, 144 residues long: uncharacterized protein (144 aa).

The tract at residues 1–24 is disordered; it reads MGKVIQFPFGEEPEKKEEKELKTE. The span at 12–24 shows a compositional bias: basic and acidic residues; that stretch reads EPEKKEEKELKTE.

This is an uncharacterized protein from Aquifex aeolicus (strain VF5).